The primary structure comprises 456 residues: Multidrug resistance protein NorM (456 aa).

Transmembrane regions (helical) follow at residues 11–31, 53–73, 93–113, 126–146, 159–179, 189–209, 242–262, 276–296, 315–335, 356–376, 391–411, and 417–437; these read LIKL…MGFV, IWLP…PVVA, VMAL…QWIL, TIGY…FQTL, AMVI…MFVY, GVGC…LLLL, FPVA…ALLV, AINF…ATSI, HVGI…TVIL, LLIF…AAGA, FIAY…TDWI, and AQGF…MLGV.

It belongs to the multi antimicrobial extrusion (MATE) (TC 2.A.66.1) family.

The protein localises to the cell inner membrane. Its function is as follows. Multidrug efflux pump that functions as a Na(+)/drug antiporter. This Vibrio vulnificus (strain YJ016) protein is Multidrug resistance protein NorM (norM).